A 228-amino-acid polypeptide reads, in one-letter code: MTIANWPACERPREKLMESGAAALSDAELLAILLRVGAAGKSAVDLARELLHRFGSLTALFAAEGRALTSVRGMGETKYAQLQAIPELARRALAESLRLPTGFDGPAAVRNYLRLTLAPLPHEVFLCLFLDPRNRMVASEEMFRGTLTRTAVYPREVARQALVHNAAGIIVAHNHPRGTTAPSQSDIRLTHELARTLDLIDVRLLDHFIVAGQEIRSLADCCDRLPGL.

Positions 102-224 constitute an MPN domain; that stretch reads GFDGPAAVRN…IRSLADCCDR (123 aa). Zn(2+) contacts are provided by His173, His175, and Asp186. Positions 173-186 match the JAMM motif motif; the sequence is HNHPRGTTAPSQSD.

It belongs to the UPF0758 family.

In Cupriavidus necator (strain ATCC 17699 / DSM 428 / KCTC 22496 / NCIMB 10442 / H16 / Stanier 337) (Ralstonia eutropha), this protein is UPF0758 protein H16_A3033.